Reading from the N-terminus, the 233-residue chain is Proteasome subunit alpha (233 aa).

Belongs to the peptidase T1A family. As to quaternary structure, the 20S proteasome core is composed of 14 alpha and 14 beta subunits that assemble into four stacked heptameric rings, resulting in a barrel-shaped structure. The two inner rings, each composed of seven catalytic beta subunits, are sandwiched by two outer rings, each composed of seven alpha subunits. The catalytic chamber with the active sites is on the inside of the barrel. Has a gated structure, the ends of the cylinder being occluded by the N-termini of the alpha-subunits. Is capped at one or both ends by the proteasome regulatory ATPase, PAN. In terms of processing, the N-terminus is blocked.

The protein localises to the cytoplasm. The formation of the proteasomal ATPase PAN-20S proteasome complex, via the docking of the C-termini of PAN into the intersubunit pockets in the alpha-rings, triggers opening of the gate for substrate entry. Interconversion between the open-gate and close-gate conformations leads to a dynamic regulation of the 20S proteasome proteolysis activity. Its function is as follows. Component of the proteasome core, a large protease complex with broad specificity involved in protein degradation. The T.acidophilum proteasome is able to cleave oligopeptides after Tyr, Leu, Phe, and to a lesser extent after Glu and Arg. Thus, displays chymotrypsin-like activity and low level of caspase-like and trypsin-like activities. This is Proteasome subunit alpha from Thermoplasma acidophilum (strain ATCC 25905 / DSM 1728 / JCM 9062 / NBRC 15155 / AMRC-C165).